We begin with the raw amino-acid sequence, 123 residues long: Crossover junction endodeoxyribonuclease Hjc (123 aa).

Glu9 provides a ligand contact to Mg(2+). The active site involves Ser29. Positions 33 and 46 each coordinate Mg(2+).

Belongs to the Holliday junction resolvase Hjc family. In terms of assembly, homodimer. Probably interacts with PCNA and RadB. Mg(2+) serves as cofactor. The cofactor is Mn(2+).

The enzyme catalyses Endonucleolytic cleavage at a junction such as a reciprocal single-stranded crossover between two homologous DNA duplexes (Holliday junction).. With respect to regulation, cleavage inhibited by RadB in the absence (but not presence) of ATP. Its function is as follows. A structure-specific endonuclease that resolves Holliday junction (HJ) intermediates during genetic recombination. Cleaves 4-way DNA junctions introducing paired nicks in opposing strands, leaving a 5'-terminal phosphate and a 3'-terminal hydroxyl group that are subsequently ligated to produce recombinant products. Cleaves both mobile and immobile junctions. Binds 4-way junction DNA, a synthetic Hj, binding is not competed by dsDNA. The polypeptide is Crossover junction endodeoxyribonuclease Hjc (Pyrococcus furiosus (strain ATCC 43587 / DSM 3638 / JCM 8422 / Vc1)).